A 729-amino-acid chain; its full sequence is Phosphoribosylformylglycinamidine synthase subunit PurL (729 aa).

The active site involves H42. Positions 45 and 84 each coordinate ATP. E86 is a Mg(2+) binding site. Substrate contacts are provided by residues 87–90 (SHNH) and R109. H88 (proton acceptor) is an active-site residue. Residue D110 coordinates Mg(2+). Position 238 (Q238) interacts with substrate. D266 is a binding site for Mg(2+). 310-312 (ESQ) serves as a coordination point for substrate. The ATP site is built by D492 and G529. Mg(2+) is bound at residue N530. S532 is a binding site for substrate.

The protein belongs to the FGAMS family. As to quaternary structure, monomer. Part of the FGAM synthase complex composed of 1 PurL, 1 PurQ and 2 PurS subunits.

It localises to the cytoplasm. The catalysed reaction is N(2)-formyl-N(1)-(5-phospho-beta-D-ribosyl)glycinamide + L-glutamine + ATP + H2O = 2-formamido-N(1)-(5-O-phospho-beta-D-ribosyl)acetamidine + L-glutamate + ADP + phosphate + H(+). It functions in the pathway purine metabolism; IMP biosynthesis via de novo pathway; 5-amino-1-(5-phospho-D-ribosyl)imidazole from N(2)-formyl-N(1)-(5-phospho-D-ribosyl)glycinamide: step 1/2. Functionally, part of the phosphoribosylformylglycinamidine synthase complex involved in the purines biosynthetic pathway. Catalyzes the ATP-dependent conversion of formylglycinamide ribonucleotide (FGAR) and glutamine to yield formylglycinamidine ribonucleotide (FGAM) and glutamate. The FGAM synthase complex is composed of three subunits. PurQ produces an ammonia molecule by converting glutamine to glutamate. PurL transfers the ammonia molecule to FGAR to form FGAM in an ATP-dependent manner. PurS interacts with PurQ and PurL and is thought to assist in the transfer of the ammonia molecule from PurQ to PurL. The polypeptide is Phosphoribosylformylglycinamidine synthase subunit PurL (Campylobacter concisus (strain 13826)).